The primary structure comprises 180 residues: uncharacterized protein (180 aa).

Residues 1-21 form the signal peptide; that stretch reads MKQCIAFMAILALSLSAISEA. Residues 23-81 form a disordered region; the sequence is GGRGVRSSGYSRPVATKPAPAPKQTQTQQQSQQPDATFGQQNMQNTATNTPNNPNNRLA. A compositionally biased stretch (low complexity) spans 27 to 78; that stretch reads VRSSGYSRPVATKPAPAPKQTQTQQQSQQPDATFGQQNMQNTATNTPNNPNN.

This is an uncharacterized protein from Pasteurella multocida (strain Pm70).